A 228-amino-acid chain; its full sequence is Probable ribosomal RNA small subunit methyltransferase A (228 aa).

The S-adenosyl-L-methionine site is built by H9, L11, G34, E55, D78, and N93.

The protein belongs to the class I-like SAM-binding methyltransferase superfamily. rRNA adenine N(6)-methyltransferase family. RsmA subfamily.

Its subcellular location is the cytoplasm. In terms of biological role, specifically dimethylates two adjacent adenosines in the loop of a conserved hairpin near the 3'-end of 16S rRNA in the 30S particle. May play a critical role in biogenesis of 30S subunits. In Pyrobaculum aerophilum (strain ATCC 51768 / DSM 7523 / JCM 9630 / CIP 104966 / NBRC 100827 / IM2), this protein is Probable ribosomal RNA small subunit methyltransferase A.